The following is a 318-amino-acid chain: Cytochrome f (318 aa).

An N-terminal signal peptide occupies residues 1–32; it reads MQNKNNYNWLKEWVIRSFLLLTLLTWPSVSNA. Heme-binding residues include Y33, C53, C56, and H57. A helical transmembrane segment spans residues 284 to 304; sequence IQGLLLFFASVVLAQIFLVLK.

Belongs to the cytochrome f family. As to quaternary structure, the 4 large subunits of the cytochrome b6-f complex are cytochrome b6, subunit IV (17 kDa polypeptide, petD), cytochrome f and the Rieske protein, while the 4 small subunits are PetG, PetL, PetM and PetN. The complex functions as a dimer. The cofactor is heme.

The protein localises to the plastid. The protein resides in the chloroplast thylakoid membrane. In terms of biological role, component of the cytochrome b6-f complex, which mediates electron transfer between photosystem II (PSII) and photosystem I (PSI), cyclic electron flow around PSI, and state transitions. The polypeptide is Cytochrome f (Angiopteris evecta (Mule's foot fern)).